Reading from the N-terminus, the 71-residue chain is Large ribosomal subunit protein uL29 (71 aa).

It belongs to the universal ribosomal protein uL29 family.

The sequence is that of Large ribosomal subunit protein uL29 from Rickettsia canadensis (strain McKiel).